The following is a 105-amino-acid chain: Translation initiation factor 1A (105 aa).

The region spanning Thr12–Thr87 is the S1-like domain.

This sequence belongs to the eIF-1A family.

Functionally, seems to be required for maximal rate of protein biosynthesis. Enhances ribosome dissociation into subunits and stabilizes the binding of the initiator Met-tRNA(I) to 40 S ribosomal subunits. This Methanococcus aeolicus (strain ATCC BAA-1280 / DSM 17508 / OCM 812 / Nankai-3) protein is Translation initiation factor 1A (eIF1A).